The primary structure comprises 143 residues: Insulin-like growth factor 1 (143 aa).

Residues Met1–Ala32 form the signal peptide. The interval Gly33–Thr61 is b. Disulfide bonds link Cys38/Cys80, Cys50/Cys93, and Cys79/Cys84. The c stretch occupies residues Gly62 to Thr73. Positions Gly74–Ala94 are a. The interval Pro95 to Ala102 is d. Residues Ala99–Lys143 are disordered. The propeptide at Arg103–Lys143 is e peptide. The span at Lys126–Gly136 shows a compositional bias: basic residues.

The protein belongs to the insulin family. As to quaternary structure, forms a ternary complex with IGFR1 and ITGAV:ITGB3. Forms a ternary complex with IGFR1 and ITGA6:ITGB4. Forms a ternary complex with IGFBP3 and ALS.

Its subcellular location is the secreted. Functionally, the insulin-like growth factors, isolated from plasma, are structurally and functionally related to insulin but have a much higher growth-promoting activity. May be a physiological regulator of [1-14C]-2-deoxy-D-glucose (2DG) transport and glycogen synthesis in osteoblasts. Stimulates glucose transport in bone-derived osteoblastic (PyMS) cells and is effective at much lower concentrations than insulin, not only regarding glycogen and DNA synthesis but also with regard to enhancing glucose uptake. May play a role in synapse maturation. Ca(2+)-dependent exocytosis of IGF1 is required for sensory perception of smell in the olfactory bulb. Acts as a ligand for IGF1R. Binds to the alpha subunit of IGF1R, leading to the activation of the intrinsic tyrosine kinase activity which autophosphorylates tyrosine residues in the beta subunit thus initiating a cascade of down-stream signaling events leading to activation of the PI3K-AKT/PKB and the Ras-MAPK pathways. Binds to integrins ITGAV:ITGB3 and ITGA6:ITGB4. Its binding to integrins and subsequent ternary complex formation with integrins and IGFR1 are essential for IGF1 signaling. Induces the phosphorylation and activation of IGFR1, MAPK3/ERK1, MAPK1/ERK2 and AKT1. As part of the MAPK/ERK signaling pathway, acts as a negative regulator of apoptosis in cardiomyocytes via promotion of STUB1/CHIP-mediated ubiquitination and degradation of ICER-type isoforms of CREM. The sequence is that of Insulin-like growth factor 1 from Oryctolagus cuniculus (Rabbit).